Consider the following 324-residue polypeptide: Beta-ketoacyl-[acyl-carrier-protein] synthase III (324 aa).

Residues C112 and H249 contribute to the active site. The segment at 250 to 254 (QANRR) is ACP-binding. N279 is an active-site residue.

This sequence belongs to the thiolase-like superfamily. FabH family. As to quaternary structure, homodimer.

The protein resides in the cytoplasm. It carries out the reaction malonyl-[ACP] + acetyl-CoA + H(+) = 3-oxobutanoyl-[ACP] + CO2 + CoA. It participates in lipid metabolism; fatty acid biosynthesis. Functionally, catalyzes the condensation reaction of fatty acid synthesis by the addition to an acyl acceptor of two carbons from malonyl-ACP. Catalyzes the first condensation reaction which initiates fatty acid synthesis and may therefore play a role in governing the total rate of fatty acid production. Possesses both acetoacetyl-ACP synthase and acetyl transacylase activities. Its substrate specificity determines the biosynthesis of branched-chain and/or straight-chain of fatty acids. This Streptococcus equi subsp. zooepidemicus (strain MGCS10565) protein is Beta-ketoacyl-[acyl-carrier-protein] synthase III.